Reading from the N-terminus, the 62-residue chain is Cryptic Mu-phage protein com (62 aa).

Belongs to the com family.

The sequence is that of Cryptic Mu-phage protein com from Shigella dysenteriae.